Reading from the N-terminus, the 202-residue chain is D-alanyl-D-alanine dipeptidase (202 aa).

Residues His-116 and Asp-123 each coordinate Zn(2+). Glu-181 functions as the Proton donor/acceptor in the catalytic mechanism. Residue His-184 participates in Zn(2+) binding.

Belongs to the peptidase M15D family. As to quaternary structure, homodimer. Zn(2+) is required as a cofactor. Requires Fe(2+) as cofactor. The cofactor is Co(2+). It depends on Ni(2+) as a cofactor.

The catalysed reaction is D-alanyl-D-alanine + H2O = 2 D-alanine. With respect to regulation, inhibited by aminoalkyl phosphinate analogs. In terms of biological role, catalyzes hydrolysis of the D-alanyl-D-alanine dipeptide. In Enterococcus faecium (Streptococcus faecium), this protein is D-alanyl-D-alanine dipeptidase (vanX).